The sequence spans 97 residues: Nucleoid-associated protein Hac_0048 (97 aa).

It belongs to the YbaB/EbfC family. As to quaternary structure, homodimer.

It localises to the cytoplasm. It is found in the nucleoid. Functionally, binds to DNA and alters its conformation. May be involved in regulation of gene expression, nucleoid organization and DNA protection. This Helicobacter acinonychis (strain Sheeba) protein is Nucleoid-associated protein Hac_0048.